A 155-amino-acid chain; its full sequence is 6,7-dimethyl-8-ribityllumazine synthase (155 aa).

5-amino-6-(D-ribitylamino)uracil contacts are provided by residues F23, 57–59 (AFE), and 81–83 (AVI). 86-87 (AT) is a (2S)-2-hydroxy-3-oxobutyl phosphate binding site. The active-site Proton donor is the H89. Residue F114 coordinates 5-amino-6-(D-ribitylamino)uracil. Residue R128 participates in (2S)-2-hydroxy-3-oxobutyl phosphate binding.

It belongs to the DMRL synthase family.

The catalysed reaction is (2S)-2-hydroxy-3-oxobutyl phosphate + 5-amino-6-(D-ribitylamino)uracil = 6,7-dimethyl-8-(1-D-ribityl)lumazine + phosphate + 2 H2O + H(+). It functions in the pathway cofactor biosynthesis; riboflavin biosynthesis; riboflavin from 2-hydroxy-3-oxobutyl phosphate and 5-amino-6-(D-ribitylamino)uracil: step 1/2. Its function is as follows. Catalyzes the formation of 6,7-dimethyl-8-ribityllumazine by condensation of 5-amino-6-(D-ribitylamino)uracil with 3,4-dihydroxy-2-butanone 4-phosphate. This is the penultimate step in the biosynthesis of riboflavin. This chain is 6,7-dimethyl-8-ribityllumazine synthase, found in Geotalea uraniireducens (strain Rf4) (Geobacter uraniireducens).